Here is a 250-residue protein sequence, read N- to C-terminus: UPF0259 membrane protein SG1383 (250 aa).

6 helical membrane passes run 20-40 (FASI…LGHA), 86-106 (AGTL…LTMI), 121-141 (IGLS…TTLL), 146-166 (LLLI…APVI), 191-211 (LLAP…LLAT), and 219-239 (LVAV…LLIY).

The protein belongs to the UPF0259 family.

The protein localises to the cell inner membrane. The polypeptide is UPF0259 membrane protein SG1383 (Sodalis glossinidius (strain morsitans)).